A 244-amino-acid chain; its full sequence is ATP synthase subunit a (244 aa).

A run of 7 helical transmembrane segments spans residues 20–40 (FFDV…VIVI), 81–101 (GILF…LNVM), 113–133 (QLLV…IWGF), 140–160 (FLNI…LVFI), 176–196 (LFAN…AAIY), 202–222 (FIGI…LGIA), and 223–243 (FLQA…IINL).

This sequence belongs to the ATPase A chain family. As to quaternary structure, F-type ATPases have 2 components, CF(1) - the catalytic core - and CF(0) - the membrane proton channel. CF(1) has five subunits: alpha(3), beta(3), gamma(1), delta(1), epsilon(1). CF(0) has three main subunits: a, b and c.

It is found in the mitochondrion inner membrane. Its function is as follows. Mitochondrial membrane ATP synthase (F(1)F(0) ATP synthase or Complex V) produces ATP from ADP in the presence of a proton gradient across the membrane which is generated by electron transport complexes of the respiratory chain. F-type ATPases consist of two structural domains, F(1) - containing the extramembraneous catalytic core and F(0) - containing the membrane proton channel, linked together by a central stalk and a peripheral stalk. During catalysis, ATP synthesis in the catalytic domain of F(1) is coupled via a rotary mechanism of the central stalk subunits to proton translocation. Key component of the proton channel; it may play a direct role in the translocation of protons across the membrane. This chain is ATP synthase subunit a (atp6), found in Dictyostelium citrinum (Slime mold).